Consider the following 189-residue polypeptide: Class A basic helix-loop-helix protein 15 (189 aa).

Positions 1–12 (MKTKNRPPRRRA) are enriched in basic residues. 2 disordered regions span residues 1–85 (MKTK…ERER) and 167–189 (TEAQ…REGT). Threonine 25 is modified (phosphothreonine). The segment covering 68–85 (GRRDSSIQRRLESNERER) has biased composition (basic and acidic residues). A bHLH domain is found at 75–127 (QRRLESNERERQRMHKLNNAFQALREVIPHVRADKKLSKIETLTLAKNYIKSL).

Forms homodimers or heterodimers with TCF3 gene products E12 and E47. These dimers bind to the E-box site, however, heterodimer with MYOD1 does not bind target DNA. In terms of tissue distribution, expressed in brain, liver, spleen and skeletal muscle.

It is found in the nucleus. Plays a role in controlling the transcriptional activity of MYOD1, ensuring that expanding myoblast populations remain undifferentiated. Repression may occur through muscle-specific E-box occupancy by homodimers. May also negatively regulate bHLH-mediated transcription through an N-terminal repressor domain. Serves as a key regulator of acinar cell function, stability, and identity. Also required for normal organelle localization in exocrine cells and for mitochondrial calcium ion transport. May function as a unique regulator of gene expression in several different embryonic and postnatal cell lineages. Binds to the E-box consensus sequence 5'-CANNTG-3'. The sequence is that of Class A basic helix-loop-helix protein 15 (BHLHA15) from Homo sapiens (Human).